Here is a 249-residue protein sequence, read N- to C-terminus: Probable transcriptional regulatory protein Psyc_0938 (249 aa).

The protein belongs to the TACO1 family.

Its subcellular location is the cytoplasm. This chain is Probable transcriptional regulatory protein Psyc_0938, found in Psychrobacter arcticus (strain DSM 17307 / VKM B-2377 / 273-4).